Reading from the N-terminus, the 291-residue chain is 4-diphosphocytidyl-2-C-methyl-D-erythritol kinase (291 aa).

Lys10 is an active-site residue. Residue 94 to 104 (PVSAGLAGGSS) coordinates ATP. Residue Asp136 is part of the active site.

Belongs to the GHMP kinase family. IspE subfamily.

It catalyses the reaction 4-CDP-2-C-methyl-D-erythritol + ATP = 4-CDP-2-C-methyl-D-erythritol 2-phosphate + ADP + H(+). The protein operates within isoprenoid biosynthesis; isopentenyl diphosphate biosynthesis via DXP pathway; isopentenyl diphosphate from 1-deoxy-D-xylulose 5-phosphate: step 3/6. Catalyzes the phosphorylation of the position 2 hydroxy group of 4-diphosphocytidyl-2C-methyl-D-erythritol. The sequence is that of 4-diphosphocytidyl-2-C-methyl-D-erythritol kinase from Listeria innocua serovar 6a (strain ATCC BAA-680 / CLIP 11262).